Consider the following 804-residue polypeptide: Ribonucleoside-diphosphate reductase large subunit-like protein (804 aa).

It belongs to the ribonucleoside diphosphate reductase large chain family.

It localises to the virion. The protein localises to the host cytoplasm. Its function is as follows. Does not possess a ribonucleotide reductase activity. Betaherpesviruses probably use another strategy to expand the dNTP pool in a quiescent host cell. The chain is Ribonucleoside-diphosphate reductase large subunit-like protein from Homo sapiens (Human).